The primary structure comprises 169 residues: Ureidoglycolate lyase (169 aa).

Belongs to the ureidoglycolate lyase family. As to quaternary structure, homodimer. The cofactor is Ni(2+).

It catalyses the reaction (S)-ureidoglycolate = urea + glyoxylate. It functions in the pathway nitrogen metabolism; (S)-allantoin degradation. Catalyzes the catabolism of the allantoin degradation intermediate (S)-ureidoglycolate, generating urea and glyoxylate. Involved in the utilization of allantoin as nitrogen source. In Pseudomonas paraeruginosa (strain DSM 24068 / PA7) (Pseudomonas aeruginosa (strain PA7)), this protein is Ureidoglycolate lyase.